We begin with the raw amino-acid sequence, 191 residues long: Glutathione-dependent formaldehyde-activating enzyme (191 aa).

In terms of domain architecture, CENP-V/GFA spans 22-169 (FAGGTLQCLC…LTELGLTPYD (148 aa)). Zn(2+) is bound by residues cysteine 29, cysteine 31, cysteine 50, cysteine 52, cysteine 55, cysteine 97, and cysteine 100.

It belongs to the Gfa family. Requires Zn(2+) as cofactor.

It catalyses the reaction S-(hydroxymethyl)glutathione = glutathione + formaldehyde. It participates in one-carbon metabolism; formaldehyde degradation; formate from formaldehyde (glutathione route): step 1/3. Its function is as follows. Catalyzes the condensation of formaldehyde and glutathione to S-hydroxymethylglutathione. The sequence is that of Glutathione-dependent formaldehyde-activating enzyme from Xanthomonas campestris pv. campestris (strain 8004).